Reading from the N-terminus, the 432-residue chain is Trigger factor (432 aa).

The region spanning 161–246 (EDRVTIDFTG…LKKVEERELP (86 aa)) is the PPIase FKBP-type domain.

The protein belongs to the FKBP-type PPIase family. Tig subfamily. Homodimer and monomer. In vivo most of the ribosomes are in complex with monomeric TF. Uncomplexed TF, however, is in a monomer-dimer equilibrium with approximately two thirds of TF existing in a dimeric state.

Its subcellular location is the cytoplasm. The catalysed reaction is [protein]-peptidylproline (omega=180) = [protein]-peptidylproline (omega=0). Its function is as follows. Involved in protein export. Acts as a chaperone by maintaining the newly synthesized protein in an open conformation. Functions as a peptidyl-prolyl cis-trans isomerase. This is Trigger factor from Shigella boydii serotype 18 (strain CDC 3083-94 / BS512).